The chain runs to 234 residues: Glucosamine-6-phosphate deaminase (234 aa).

The active-site Proton acceptor; for enolization step is the D62. N128 (for ring-opening step) is an active-site residue. H130 (proton acceptor; for ring-opening step) is an active-site residue. The For ring-opening step role is filled by E135.

It belongs to the glucosamine/galactosamine-6-phosphate isomerase family. NagB subfamily.

The catalysed reaction is alpha-D-glucosamine 6-phosphate + H2O = beta-D-fructose 6-phosphate + NH4(+). It functions in the pathway amino-sugar metabolism; N-acetylneuraminate degradation; D-fructose 6-phosphate from N-acetylneuraminate: step 5/5. In terms of biological role, catalyzes the reversible isomerization-deamination of glucosamine 6-phosphate (GlcN6P) to form fructose 6-phosphate (Fru6P) and ammonium ion. This is Glucosamine-6-phosphate deaminase from Streptococcus pyogenes serotype M3 (strain ATCC BAA-595 / MGAS315).